The chain runs to 61 residues: Double gene block protein 1 (61 aa).

The segment at 15–45 (LAGNRGKQKTRRSVAKDAIRKPASDSTNGGN) is disordered. The tract at residues 17–35 (GNRGKQKTRRSVAKDAIRK) is RNA-binding. Residues 28–37 (VAKDAIRKPA) show a composition bias toward basic and acidic residues.

It belongs to the carmovirus double gene block protein 1 family. Homodimer.

Its function is as follows. Cell-to-cell movement. Displays RNA-binding activity. This Carnation mottle virus (isolate China/Shanghai) (CarMV) protein is Double gene block protein 1.